The chain runs to 410 residues: Histone-lysine N-methyltransferase SUV39H2 (410 aa).

The Chromo domain maps to 47–105 (YEVEYLCDYKVVKDMEYYLVKWKGWPDSTNTWEPLQNLKCPLLLQQFSNDKHNYLSQVK). The Pre-SET domain maps to 189–247 (FGCSCTDCFFQKCCPAEAGVLLAYNKNQQIKIPPGTPIYECNSRCQCGPDCPNRIVQKG). Zn(2+) is bound by residues cysteine 191, cysteine 193, cysteine 196, cysteine 201, cysteine 202, cysteine 229, cysteine 233, cysteine 235, and cysteine 239. The 124-residue stretch at 250–373 (YSLCIFRTSN…AGEELTFDYQ (124 aa)) folds into the SET domain. Residues 261–263 (RGW), tyrosine 304, and 330–331 (NH) each bind S-adenosyl-L-methionine. Zn(2+) is bound at residue cysteine 333. A phosphoserine mark is found at serine 381, serine 384, and serine 388. The region spanning 394–410 (VRTVCKCGAVTCRGYLN) is the Post-SET domain. The Zn(2+) site is built by cysteine 398, cysteine 400, and cysteine 405.

This sequence belongs to the class V-like SAM-binding methyltransferase superfamily. Histone-lysine methyltransferase family. Suvar3-9 subfamily. In terms of assembly, interacts with SMAD5. The large PER complex involved in the histone methylation is composed of at least PER2, CBX3, TRIM28, SUV39H1 and/or SUV39H2; CBX3 mediates the formation of the complex. In terms of processing, ubiquitinated by the DCX(DCAF13) E3 ubiquitin ligase complex, leading to its degradation.

It localises to the nucleus. Its subcellular location is the chromosome. It is found in the centromere. The catalysed reaction is L-lysyl(9)-[histone H3] + 3 S-adenosyl-L-methionine = N(6),N(6),N(6)-trimethyl-L-lysyl(9)-[histone H3] + 3 S-adenosyl-L-homocysteine + 3 H(+). In terms of biological role, histone methyltransferase that specifically trimethylates 'Lys-9' of histone H3 using monomethylated H3 'Lys-9' as substrate. H3 'Lys-9' trimethylation represents a specific tag for epigenetic transcriptional repression by recruiting HP1 (CBX1, CBX3 and/or CBX5) proteins to methylated histones. Mainly functions in heterochromatin regions, thereby playing a central role in the establishment of constitutive heterochromatin at pericentric and telomere regions. H3 'Lys-9' trimethylation is also required to direct DNA methylation at pericentric repeats. SUV39H1 is targeted to histone H3 via its interaction with RB1 and is involved in many processes, such as cell cycle regulation, transcriptional repression and regulation of telomere length. May participate in regulation of higher-order chromatin organization during spermatogenesis. Recruited by the large PER complex to the E-box elements of the circadian target genes such as PER2 itself or PER1, contributes to the conversion of local chromatin to a heterochromatin-like repressive state through H3 'Lys-9' trimethylation. This Macaca fascicularis (Crab-eating macaque) protein is Histone-lysine N-methyltransferase SUV39H2 (SUV39H2).